Here is a 262-residue protein sequence, read N- to C-terminus: Type III pantothenate kinase (262 aa).

ATP is bound at residue 10-17 (DIGNTTTV). 110–113 (GADR) is a substrate binding site. Residue aspartate 112 is the Proton acceptor of the active site. Aspartate 134 contacts K(+). ATP is bound at residue threonine 137. Position 189 (threonine 189) interacts with substrate.

It belongs to the type III pantothenate kinase family. As to quaternary structure, homodimer. NH4(+) is required as a cofactor. Requires K(+) as cofactor.

It localises to the cytoplasm. It carries out the reaction (R)-pantothenate + ATP = (R)-4'-phosphopantothenate + ADP + H(+). The protein operates within cofactor biosynthesis; coenzyme A biosynthesis; CoA from (R)-pantothenate: step 1/5. Functionally, catalyzes the phosphorylation of pantothenate (Pan), the first step in CoA biosynthesis. This chain is Type III pantothenate kinase, found in Deinococcus radiodurans (strain ATCC 13939 / DSM 20539 / JCM 16871 / CCUG 27074 / LMG 4051 / NBRC 15346 / NCIMB 9279 / VKM B-1422 / R1).